Reading from the N-terminus, the 75-residue chain is Probable pilin MJ1469 (75 aa).

The propeptide occupies 1–11 (MKPKKIISNKA). Positions 12-20 (QISLELALL) match the QXSXEXXXL motif.

Post-translationally, the N-terminus is cleaved by the prepilin peptidase EppA, which recognizes the class III signal sequence.

The protein localises to the secreted. It is found in the cell surface. The protein resides in the fimbrium. In Methanocaldococcus jannaschii (strain ATCC 43067 / DSM 2661 / JAL-1 / JCM 10045 / NBRC 100440) (Methanococcus jannaschii), this protein is Probable pilin MJ1469.